The primary structure comprises 336 residues: TBC1 domain family member 21 (336 aa).

A Rab-GAP TBC domain is found at 57 to 265 (GLHPFVRTEA…RLWEVLLTGK (209 aa)).

In terms of assembly, interacts with ACTB. Interacts with ARMC12. Interacts with TOMM20 and DNAH7. Interacts with RAP1A. Interacts with RAB10. Expressed in testis, specifically in elongating and elongated spermatids (at protein level). Expressed in the sperm midpiece (at protein level).

The protein localises to the cytoplasmic vesicle. Its subcellular location is the secretory vesicle. The protein resides in the acrosome. It localises to the cytoplasm. It is found in the cytoskeleton. In terms of biological role, acts as a GTPase-activating protein for Rab family protein (s). Essential for the establishment of male fertility, and is required for both the production of normal sperm number and sperm function. Plays an important role in the formation of intact mitochondria, outer dense fibers and axoneme within the sperm tail. Essential for sperm mitochondrial sheath formation and for the interactions of ARMC12 with VDAC2 and VDAC3. May be involved in acrosome formation and cytoskeletal reorganization during spermiogenesis, possibly by regulating RAB3A activity. The sequence is that of TBC1 domain family member 21 from Mus musculus (Mouse).